The chain runs to 336 residues: Glucokinase (336 aa).

13 to 18 (ADVGGT) provides a ligand contact to ATP.

Belongs to the bacterial glucokinase family.

The protein localises to the cytoplasm. The enzyme catalyses D-glucose + ATP = D-glucose 6-phosphate + ADP + H(+). This is Glucokinase from Cupriavidus metallidurans (strain ATCC 43123 / DSM 2839 / NBRC 102507 / CH34) (Ralstonia metallidurans).